The following is a 328-amino-acid chain: Aspartate carbamoyltransferase catalytic subunit (328 aa).

Residues R64 and T65 each coordinate carbamoyl phosphate. Residue K92 participates in L-aspartate binding. R114, H144, and Q147 together coordinate carbamoyl phosphate. Residues R177 and R232 each coordinate L-aspartate. Residues G273 and P274 each coordinate carbamoyl phosphate.

The protein belongs to the aspartate/ornithine carbamoyltransferase superfamily. ATCase family. Heterododecamer (2C3:3R2) of six catalytic PyrB chains organized as two trimers (C3), and six regulatory PyrI chains organized as three dimers (R2).

It carries out the reaction carbamoyl phosphate + L-aspartate = N-carbamoyl-L-aspartate + phosphate + H(+). It functions in the pathway pyrimidine metabolism; UMP biosynthesis via de novo pathway; (S)-dihydroorotate from bicarbonate: step 2/3. In terms of biological role, catalyzes the condensation of carbamoyl phosphate and aspartate to form carbamoyl aspartate and inorganic phosphate, the committed step in the de novo pyrimidine nucleotide biosynthesis pathway. In Halorhodospira halophila (strain DSM 244 / SL1) (Ectothiorhodospira halophila (strain DSM 244 / SL1)), this protein is Aspartate carbamoyltransferase catalytic subunit.